Consider the following 227-residue polypeptide: uncharacterized protein (227 aa).

The RCK N-terminal domain occupies 3–119; sequence RADFCIIGLG…STMGIREALI (117 aa). Residues 134-221 form the RCK C-terminal domain; it reads HGLENEIINL…LNKYLNYINP (88 aa).

This is an uncharacterized protein from Mycoplasma genitalium (strain ATCC 33530 / DSM 19775 / NCTC 10195 / G37) (Mycoplasmoides genitalium).